The primary structure comprises 301 residues: Small ribosomal subunit protein uS2 (301 aa).

A disordered region spans residues 237–301 (PTESWNDTVV…QDWSNSTSQW (65 aa)). The span at 264 to 278 (PQYAPAPQAAAAPVA) shows a compositional bias: low complexity.

Belongs to the universal ribosomal protein uS2 family. As to quaternary structure, component of the small ribosomal subunit. Mature ribosomes consist of a small (40S) and a large (60S) subunit. The 40S subunit contains about 33 different proteins and 1 molecule of RNA (18S). The 60S subunit contains about 49 different proteins and 3 molecules of RNA (28S, 5.8S and 5S). Interacts with ribosomal protein S21.

It localises to the cytoplasm. Functionally, required for the assembly and/or stability of the 40S ribosomal subunit. Required for the processing of the 20S rRNA-precursor to mature 18S rRNA in a late step of the maturation of 40S ribosomal subunits. The chain is Small ribosomal subunit protein uS2 from Diaphorina citri (Asian citrus psyllid).